The following is a 339-amino-acid chain: 4-dimethylallyltryptophan N-methyltransferase easF (339 aa).

The protein belongs to the methyltransferase superfamily. As to quaternary structure, homodimer.

It catalyses the reaction 4-(3-methylbut-2-enyl)-L-tryptophan + S-adenosyl-L-methionine = 4-(3-methylbut-2-enyl)-L-abrine + S-adenosyl-L-homocysteine + H(+). The protein operates within alkaloid biosynthesis; ergot alkaloid biosynthesis. In terms of biological role, 4-dimethylallyltryptophan N-methyltransferase; part of the gene cluster that mediates the biosynthesis of fumiclavanine C, a fungal ergot alkaloid. DmaW catalyzes the first step of ergot alkaloid biosynthesis by condensing dimethylallyl diphosphate (DMAP) and tryptophan to form 4-dimethylallyl-L-tryptophan. The second step is catalyzed by the methyltransferase easF that methylates 4-dimethylallyl-L-tryptophan in the presence of S-adenosyl-L-methionine, resulting in the formation of 4-dimethylallyl-L-abrine. The catalase easC and the FAD-dependent oxidoreductase easE then transform 4-dimethylallyl-L-abrine to chanoclavine-I which is further oxidized by EasD in the presence of NAD(+), resulting in the formation of chanoclavine-I aldehyde. EasA reduces chanoclavine-I aldehyde to dihydrochanoclavine-I aldehyde that spontaneously dehydrates to form 6,8-dimethyl-6,7-didehydroergoline. EasG then catalyzes the reduction of 6,8-dimethyl-6,7-didehydroergoline to form festuclavine. Hydrolysis of festuclavine by easM then leads to the formation of fumigaclavine B which is in turn acetylated by easN to fumigaclavine A. Finally, easL catalyzes the conversion of fumigaclavine A into fumigaclavine C by attaching a dimethylallyl moiety to C-2 of the indole nucleus. This is 4-dimethylallyltryptophan N-methyltransferase easF from Aspergillus fumigatus (strain ATCC MYA-4609 / CBS 101355 / FGSC A1100 / Af293) (Neosartorya fumigata).